The following is a 320-amino-acid chain: Cytochrome f (320 aa).

Residues 1–35 form the signal peptide; it reads MQTRNTLSWIREEITRSISVSLMIYIITWASISSA. 4 residues coordinate heme: Tyr36, Cys56, Cys59, and His60. The chain crosses the membrane as a helical span at residues 286-306; the sequence is VQGLLFFLGSVVLAQIFLVLK.

This sequence belongs to the cytochrome f family. In terms of assembly, the 4 large subunits of the cytochrome b6-f complex are cytochrome b6, subunit IV (17 kDa polypeptide, petD), cytochrome f and the Rieske protein, while the 4 small subunits are PetG, PetL, PetM and PetN. The complex functions as a dimer. Heme is required as a cofactor.

The protein resides in the plastid. It localises to the chloroplast thylakoid membrane. Its function is as follows. Component of the cytochrome b6-f complex, which mediates electron transfer between photosystem II (PSII) and photosystem I (PSI), cyclic electron flow around PSI, and state transitions. In Olimarabidopsis pumila (Dwarf rocket), this protein is Cytochrome f.